A 237-amino-acid chain; its full sequence is Putative N-acetylmannosamine-6-phosphate 2-epimerase (237 aa).

The protein belongs to the NanE family.

The enzyme catalyses an N-acyl-D-glucosamine 6-phosphate = an N-acyl-D-mannosamine 6-phosphate. It functions in the pathway amino-sugar metabolism; N-acetylneuraminate degradation; D-fructose 6-phosphate from N-acetylneuraminate: step 3/5. Its function is as follows. Converts N-acetylmannosamine-6-phosphate (ManNAc-6-P) to N-acetylglucosamine-6-phosphate (GlcNAc-6-P). The protein is Putative N-acetylmannosamine-6-phosphate 2-epimerase of Listeria monocytogenes serotype 4a (strain HCC23).